The sequence spans 68 residues: Amphipathic peptide OcyC1 (68 aa).

An N-terminal signal peptide occupies residues 1–23 (MKAQLCILLIALVLFQTFSQSDA). Residue phenylalanine 36 is modified to Phenylalanine amide. Residues 38–68 (RRGLNDLDDLDELFDGEISQADVDFLNELMR) constitute a propeptide that is removed on maturation.

It belongs to the non-disulfide-bridged peptide (NDBP) superfamily. Short antimicrobial peptide (group 4) family. In terms of tissue distribution, expressed by the venom gland.

Its subcellular location is the secreted. It is found in the target cell membrane. In terms of biological role, antimicrobial peptide. Inhibits the growth of Gram-positive and Gram-negative bacteria. Shows antifungal activity with MIC values ranging from 12.5 to 25 uM. Also shows an inhibitory activity on C.albicans biofilms at high concentrations. Shows low cytotoxic activity and has weak hemolytic activity. The sequence is that of Amphipathic peptide OcyC1 from Opisthacanthus cayaporum (South American scorpion).